The primary structure comprises 215 residues: Methylosome subunit pICln (215 aa).

Disordered stretches follow at residues 88 to 120 (GDPP…DEDD) and 160 to 215 (HPDS…DADE). Composition is skewed to acidic residues over residues 105-120 (AEVD…DEDD), 167-190 (DSED…EDDA), and 203-215 (LDDD…DADE).

The protein belongs to the pICln (TC 1.A.47) family. Component of the methylosome, a 20S complex containing at least CLNS1A/pICln, PRMT5/SKB1 and WDR77/MEP50; may mediate SNRPD1 and SNRPD3 methylation. Forms a 6S pICln-Sm complex composed of CLNS1A/pICln, SNRPD1, SNRPD2, SNRPE, SNRPF and SNRPG; ring-like structure where CLNS1A/pICln mimics additional Sm proteins and which is unable to assemble into the core snRNP.

The protein resides in the cytoplasm. It localises to the cytosol. Its subcellular location is the nucleus. It is found in the cytoskeleton. In terms of biological role, involved in both the assembly of spliceosomal snRNPs and the methylation of Sm proteins. Chaperone that regulates the assembly of spliceosomal U1, U2, U4 and U5 small nuclear ribonucleoproteins (snRNPs), the building blocks of the spliceosome, and thereby plays an important role in the splicing of cellular pre-mRNAs. Most spliceosomal snRNPs contain a common set of Sm proteins SNRPB, SNRPD1, SNRPD2, SNRPD3, SNRPE, SNRPF and SNRPG that assemble in a heptameric protein ring on the Sm site of the small nuclear RNA to form the core snRNP (Sm core). In the cytosol, the Sm proteins SNRPD1, SNRPD2, SNRPE, SNRPF and SNRPG are trapped in an inactive 6S pICln-Sm complex by the chaperone CLNS1A that controls the assembly of the core snRNP. Dissociation by the SMN complex of CLNS1A from the trapped Sm proteins and their transfer to an SMN-Sm complex triggers the assembly of core snRNPs and their transport to the nucleus. This chain is Methylosome subunit pICln (icln), found in Drosophila melanogaster (Fruit fly).